A 511-amino-acid chain; its full sequence is ATP synthase subunit alpha (511 aa).

Residue 169-176 (GDRQTGKT) coordinates ATP.

The protein belongs to the ATPase alpha/beta chains family. F-type ATPases have 2 components, CF(1) - the catalytic core - and CF(0) - the membrane proton channel. CF(1) has five subunits: alpha(3), beta(3), gamma(1), delta(1), epsilon(1). CF(0) has three main subunits: a(1), b(2) and c(9-12). The alpha and beta chains form an alternating ring which encloses part of the gamma chain. CF(1) is attached to CF(0) by a central stalk formed by the gamma and epsilon chains, while a peripheral stalk is formed by the delta and b chains.

It localises to the cell inner membrane. It catalyses the reaction ATP + H2O + 4 H(+)(in) = ADP + phosphate + 5 H(+)(out). Functionally, produces ATP from ADP in the presence of a proton gradient across the membrane. The alpha chain is a regulatory subunit. This chain is ATP synthase subunit alpha, found in Janthinobacterium sp. (strain Marseille) (Minibacterium massiliensis).